The primary structure comprises 82 residues: QEGNVCHRPCFRCHVCGETIAACAACSICIGCEEVVEDACAGNPCYWCDNCGVNDGSHRTTRDTADKTHGGSQRDRFFQSIA.

The segment at 58–82 is disordered; sequence HRTTRDTADKTHGGSQRDRFFQSIA.

Contains 6 disulfide bonds. As to expression, expressed by the venom duct.

Its subcellular location is the secreted. Its function is as follows. Acts as a neurotoxin by inhibiting an ion channel. The sequence is that of Turripeptide OL139 from Iotyrris olangoensis (Sea snail).